Consider the following 336-residue polypeptide: Apyrase (336 aa).

Residues 1-21 (MFLKFCVVAFAICLSINLSEG) form the signal peptide. The N-linked (GlcNAc...) asparagine glycan is linked to Asn-209.

This sequence belongs to the apyrase family. It depends on Ca(2+) as a cofactor. Salivary gland (at protein level).

The protein localises to the secreted. The catalysed reaction is a ribonucleoside 5'-triphosphate + 2 H2O = a ribonucleoside 5'-phosphate + 2 phosphate + 2 H(+). Its function is as follows. Facilitates hematophagy by inhibiting ADP- and collagen-dependent platelet aggregation in the host. Cleaves adenosine triphosphate (ATP) and adenosine diphosphate (ADP) to adenosine monophosphate (AMP) and inorganic phosphate in calcium-dependent manner. This Phlebotomus duboscqi (Sandfly) protein is Apyrase.